Consider the following 157-residue polypeptide: 2-C-methyl-D-erythritol 2,4-cyclodiphosphate synthase (157 aa).

A divalent metal cation-binding residues include Asp-8 and His-10. 4-CDP-2-C-methyl-D-erythritol 2-phosphate-binding positions include 8-10 (DVH) and 34-35 (HS). His-42 provides a ligand contact to a divalent metal cation. Residues 56–58 (DIG), 132–135 (TTNE), and Arg-142 each bind 4-CDP-2-C-methyl-D-erythritol 2-phosphate.

Belongs to the IspF family. In terms of assembly, homotrimer. A divalent metal cation serves as cofactor.

The enzyme catalyses 4-CDP-2-C-methyl-D-erythritol 2-phosphate = 2-C-methyl-D-erythritol 2,4-cyclic diphosphate + CMP. The protein operates within isoprenoid biosynthesis; isopentenyl diphosphate biosynthesis via DXP pathway; isopentenyl diphosphate from 1-deoxy-D-xylulose 5-phosphate: step 4/6. In terms of biological role, involved in the biosynthesis of isopentenyl diphosphate (IPP) and dimethylallyl diphosphate (DMAPP), two major building blocks of isoprenoid compounds. Catalyzes the conversion of 4-diphosphocytidyl-2-C-methyl-D-erythritol 2-phosphate (CDP-ME2P) to 2-C-methyl-D-erythritol 2,4-cyclodiphosphate (ME-CPP) with a corresponding release of cytidine 5-monophosphate (CMP). This is 2-C-methyl-D-erythritol 2,4-cyclodiphosphate synthase from Chlorobium luteolum (strain DSM 273 / BCRC 81028 / 2530) (Pelodictyon luteolum).